The sequence spans 570 residues: Sulfite reductase [NADPH] hemoprotein beta-component 1 (570 aa).

Residues C434, C440, C479, and C483 each coordinate [4Fe-4S] cluster. A siroheme-binding site is contributed by C483.

Belongs to the nitrite and sulfite reductase 4Fe-4S domain family. Alpha(8)-beta(8). The alpha component is a flavoprotein, the beta component is a hemoprotein. Siroheme serves as cofactor. The cofactor is [4Fe-4S] cluster.

The enzyme catalyses hydrogen sulfide + 3 NADP(+) + 3 H2O = sulfite + 3 NADPH + 4 H(+). It functions in the pathway sulfur metabolism; hydrogen sulfide biosynthesis; hydrogen sulfide from sulfite (NADPH route): step 1/1. Functionally, component of the sulfite reductase complex that catalyzes the 6-electron reduction of sulfite to sulfide. This is one of several activities required for the biosynthesis of L-cysteine from sulfate. This is Sulfite reductase [NADPH] hemoprotein beta-component 1 from Klebsiella pneumoniae (strain 342).